Reading from the N-terminus, the 179-residue chain is Large ribosomal subunit protein uL5 (179 aa).

Belongs to the universal ribosomal protein uL5 family. Part of the 50S ribosomal subunit; part of the 5S rRNA/L5/L18/L25 subcomplex. Contacts the 5S rRNA and the P site tRNA. Forms a bridge to the 30S subunit in the 70S ribosome.

In terms of biological role, this is one of the proteins that bind and probably mediate the attachment of the 5S RNA into the large ribosomal subunit, where it forms part of the central protuberance. In the 70S ribosome it contacts protein S13 of the 30S subunit (bridge B1b), connecting the 2 subunits; this bridge is implicated in subunit movement. Contacts the P site tRNA; the 5S rRNA and some of its associated proteins might help stabilize positioning of ribosome-bound tRNAs. This chain is Large ribosomal subunit protein uL5, found in Paraburkholderia phymatum (strain DSM 17167 / CIP 108236 / LMG 21445 / STM815) (Burkholderia phymatum).